The primary structure comprises 240 residues: ATP-dependent Clp protease proteolytic subunit 2 (240 aa).

The Nucleophile role is filled by S132. Residue H157 is part of the active site.

It belongs to the peptidase S14 family. Fourteen ClpP subunits assemble into 2 heptameric rings which stack back to back to give a disk-like structure with a central cavity, resembling the structure of eukaryotic proteasomes.

Its subcellular location is the cytoplasm. It carries out the reaction Hydrolysis of proteins to small peptides in the presence of ATP and magnesium. alpha-casein is the usual test substrate. In the absence of ATP, only oligopeptides shorter than five residues are hydrolyzed (such as succinyl-Leu-Tyr-|-NHMec, and Leu-Tyr-Leu-|-Tyr-Trp, in which cleavage of the -Tyr-|-Leu- and -Tyr-|-Trp bonds also occurs).. Its function is as follows. Cleaves peptides in various proteins in a process that requires ATP hydrolysis. Has a chymotrypsin-like activity. Plays a major role in the degradation of misfolded proteins. The polypeptide is ATP-dependent Clp protease proteolytic subunit 2 (Synechococcus elongatus (strain ATCC 33912 / PCC 7942 / FACHB-805) (Anacystis nidulans R2)).